The primary structure comprises 443 residues: 23S rRNA (uracil(1939)-C(5))-methyltransferase RlmD (443 aa).

The TRAM domain occupies 4–66 (QNRFDRTSFQ…RHFDEARVVE (63 aa)). Residues Cys79, Cys85, Cys88, and Cys167 each coordinate [4Fe-4S] cluster. S-adenosyl-L-methionine is bound by residues Gln275, Phe304, Asn309, Glu325, Asp352, and Asp373. Catalysis depends on Cys399, which acts as the Nucleophile.

This sequence belongs to the class I-like SAM-binding methyltransferase superfamily. RNA M5U methyltransferase family. RlmD subfamily.

The enzyme catalyses uridine(1939) in 23S rRNA + S-adenosyl-L-methionine = 5-methyluridine(1939) in 23S rRNA + S-adenosyl-L-homocysteine + H(+). Functionally, catalyzes the formation of 5-methyl-uridine at position 1939 (m5U1939) in 23S rRNA. This chain is 23S rRNA (uracil(1939)-C(5))-methyltransferase RlmD, found in Xylella fastidiosa (strain 9a5c).